A 268-amino-acid chain; its full sequence is Tetratricopeptide repeat protein 33 (268 aa).

The disordered stretch occupies residues 14–34; sequence VSKQTVQQFEQDSEQADEDEV. The segment covering 24–34 has biased composition (acidic residues); that stretch reads QDSEQADEDEV. TPR repeat units follow at residues 60–93, 94–127, and 128–161; these read SKRL…TPED, AVLY…RPIW, and WEAW…HPSE. A disordered region spans residues 249-268; that stretch reads EGDDNPTSSSQSVLIKARGL.

The polypeptide is Tetratricopeptide repeat protein 33 (ttc33) (Danio rerio (Zebrafish)).